The sequence spans 479 residues: Lysosomal protective protein (479 aa).

Residues 1–27 (MFRAALWPPVLLLLQLLLLACAPGGEG) form the signal peptide. Disulfide bonds link cysteine 87–cysteine 361, cysteine 239–cysteine 255, cysteine 240–cysteine 245, and cysteine 280–cysteine 330. An N-linked (GlcNAc...) asparagine glycan is attached at asparagine 144. Serine 177 is an active-site residue. Asparagine 332 carries an N-linked (GlcNAc...) asparagine glycan. Catalysis depends on residues aspartate 399 and histidine 456.

Belongs to the peptidase S10 family. In terms of assembly, heterodimer of a 32 kDa chain and a 20 kDa chain; disulfide-linked.

The protein localises to the lysosome. The enzyme catalyses Release of a C-terminal amino acid with broad specificity.. Protective protein appears to be essential for both the activity of beta-galactosidase and neuraminidase, it associates with these enzymes and exerts a protective function necessary for their stability and activity. This protein is also a carboxypeptidase and can deamidate tachykinins. This is Lysosomal protective protein (CTSA) from Bos taurus (Bovine).